A 28-amino-acid chain; its full sequence is Gamma-conotoxin-like de7a (28 aa).

Disulfide bonds link Cys-2–Cys-18, Cys-9–Cys-22, and Cys-17–Cys-27. Pro-4 is modified (4-hydroxyproline). 4-carboxyglutamate is present on residues Glu-13 and Glu-16. Serine amide is present on Ser-28.

The protein belongs to the conotoxin O1 superfamily. As to expression, expressed by the venom duct.

The protein resides in the secreted. Gamma-conotoxins may act on voltage-gated non-specific cation pacemaker channels (HCN). The protein is Gamma-conotoxin-like de7a of Conasprella delessertii (Sozon's cone).